Here is a 436-residue protein sequence, read N- to C-terminus: GTPase Der (436 aa).

EngA-type G domains are found at residues 4–167 and 175–351; these read PTVA…PTEV and IRFS…ESQN. Residues 10–17, 57–61, 119–122, 181–188, 229–233, and 294–297 each bind GTP; these read GRPNVGKS, DTGGI, NKVD, DTAGM, and NKWD. The 85-residue stretch at 352–436 folds into the KH-like domain; it reads RRISSAVLND…PIHLIARKRK (85 aa).

This sequence belongs to the TRAFAC class TrmE-Era-EngA-EngB-Septin-like GTPase superfamily. EngA (Der) GTPase family. In terms of assembly, associates with the 50S ribosomal subunit.

GTPase that plays an essential role in the late steps of ribosome biogenesis. The chain is GTPase Der from Streptococcus thermophilus (strain CNRZ 1066).